The chain runs to 287 residues: Thioredoxin-related transmembrane protein 2 (287 aa).

Positions M1–A13 are cleaved as a signal peptide. At A14–M112 the chain is on the extracellular side. Residues G113–L133 form a helical membrane-spanning segment. At G134 to Q287 the chain is on the cytoplasmic side. In terms of domain architecture, Thioredoxin spans H137–S209. Residues K284–Q287 carry the Di-lysine motif motif.

Monomer. Homodimer; disulfide-linked. Occurs in both reduced and oxidized monomeric form. Oxidative conditions increase homodimerization.

The protein resides in the endoplasmic reticulum membrane. It is found in the mitochondrion membrane. Its function is as follows. Endoplasmic reticulum and mitochondria-associated protein that probably functions as a regulator of cellular redox state and thereby regulates protein post-translational modification, protein folding and mitochondrial activity. The polypeptide is Thioredoxin-related transmembrane protein 2 (tmx2) (Xenopus laevis (African clawed frog)).